The following is a 303-amino-acid chain: Mycothiol acetyltransferase (303 aa).

2 consecutive N-acetyltransferase domains span residues I4–A141 and I154–A303. Residue E38 participates in 1D-myo-inositol 2-(L-cysteinylamino)-2-deoxy-alpha-D-glucopyranoside binding. A80–V82 lines the acetyl-CoA pocket. Positions 181, 223, and 234 each coordinate 1D-myo-inositol 2-(L-cysteinylamino)-2-deoxy-alpha-D-glucopyranoside. Acetyl-CoA is bound by residues V238–I240 and Q245–R251. Y272 contacts 1D-myo-inositol 2-(L-cysteinylamino)-2-deoxy-alpha-D-glucopyranoside. N277–N282 lines the acetyl-CoA pocket.

This sequence belongs to the acetyltransferase family. MshD subfamily. Monomer.

The catalysed reaction is 1D-myo-inositol 2-(L-cysteinylamino)-2-deoxy-alpha-D-glucopyranoside + acetyl-CoA = mycothiol + CoA + H(+). In terms of biological role, catalyzes the transfer of acetyl from acetyl-CoA to desacetylmycothiol (Cys-GlcN-Ins) to form mycothiol. This chain is Mycothiol acetyltransferase, found in Nocardia farcinica (strain IFM 10152).